Consider the following 228-residue polypeptide: L-ribulose-5-phosphate 4-epimerase UlaF (228 aa).

Residues 26–27, 43–44, and 72–73 each bind substrate; these read GN, SG, and SS. Zn(2+)-binding residues include D74, H93, and H95. The Proton donor/acceptor role is filled by D118. Zn(2+) is bound at residue H167. Residue Y225 is the Proton donor/acceptor of the active site.

Belongs to the aldolase class II family. AraD/FucA subfamily. The cofactor is Zn(2+).

It carries out the reaction L-ribulose 5-phosphate = D-xylulose 5-phosphate. It functions in the pathway cofactor degradation; L-ascorbate degradation; D-xylulose 5-phosphate from L-ascorbate: step 4/4. In terms of biological role, catalyzes the isomerization of L-ribulose 5-phosphate to D-xylulose 5-phosphate. Is involved in the anaerobic L-ascorbate utilization. This chain is L-ribulose-5-phosphate 4-epimerase UlaF, found in Escherichia coli O81 (strain ED1a).